Reading from the N-terminus, the 642-residue chain is 4-hydroxy-3-methylbut-2-enyl diphosphate reductase (642 aa).

The segment at 1–282 is 4-hydroxy-3-methylbut-2-enyl diphosphate reductase; that stretch reads MRKVMLAEKA…EEAISKMSEN (282 aa). A [4Fe-4S] cluster-binding site is contributed by C13. (2E)-4-hydroxy-3-methylbut-2-enyl diphosphate-binding residues include H42 and H77. Residues H42 and H77 each contribute to the dimethylallyl diphosphate site. The isopentenyl diphosphate site is built by H42 and H77. [4Fe-4S] cluster is bound at residue C99. H127 lines the (2E)-4-hydroxy-3-methylbut-2-enyl diphosphate pocket. Residue H127 coordinates dimethylallyl diphosphate. Position 127 (H127) interacts with isopentenyl diphosphate. The active-site Proton donor is E129. T165 provides a ligand contact to (2E)-4-hydroxy-3-methylbut-2-enyl diphosphate. Residue C193 participates in [4Fe-4S] cluster binding. (2E)-4-hydroxy-3-methylbut-2-enyl diphosphate contacts are provided by S221, S222, N223, and S266. Dimethylallyl diphosphate contacts are provided by S221, S222, N223, and S266. Residues S221, S222, N223, and S266 each contribute to the isopentenyl diphosphate site. S1 motif domains are found at residues 309–377, 484–552, and 569–638; these read GASV…LSVK, GQVV…LSVK, and GSVV…LSIR.

The protein in the N-terminal section; belongs to the IspH family. [4Fe-4S] cluster serves as cofactor.

It catalyses the reaction isopentenyl diphosphate + 2 oxidized [2Fe-2S]-[ferredoxin] + H2O = (2E)-4-hydroxy-3-methylbut-2-enyl diphosphate + 2 reduced [2Fe-2S]-[ferredoxin] + 2 H(+). The enzyme catalyses dimethylallyl diphosphate + 2 oxidized [2Fe-2S]-[ferredoxin] + H2O = (2E)-4-hydroxy-3-methylbut-2-enyl diphosphate + 2 reduced [2Fe-2S]-[ferredoxin] + 2 H(+). Its pathway is isoprenoid biosynthesis; dimethylallyl diphosphate biosynthesis; dimethylallyl diphosphate from (2E)-4-hydroxy-3-methylbutenyl diphosphate: step 1/1. It functions in the pathway isoprenoid biosynthesis; isopentenyl diphosphate biosynthesis via DXP pathway; isopentenyl diphosphate from 1-deoxy-D-xylulose 5-phosphate: step 6/6. In terms of biological role, catalyzes the conversion of 1-hydroxy-2-methyl-2-(E)-butenyl 4-diphosphate (HMBPP) into a mixture of isopentenyl diphosphate (IPP) and dimethylallyl diphosphate (DMAPP). Acts in the terminal step of the DOXP/MEP pathway for isoprenoid precursor biosynthesis. The polypeptide is 4-hydroxy-3-methylbut-2-enyl diphosphate reductase (Clostridium acetobutylicum (strain ATCC 824 / DSM 792 / JCM 1419 / IAM 19013 / LMG 5710 / NBRC 13948 / NRRL B-527 / VKM B-1787 / 2291 / W)).